The sequence spans 453 residues: Proton extrusion protein PxcA (453 aa).

Residues 147-189 are disordered; sequence SQDKETQTLDNKSTNQTNSKLSNNNKISSGQNDSRLESASQKT. Over residues 154-163 the composition is skewed to polar residues; the sequence is TLDNKSTNQT. Residues 164-175 are compositionally biased toward low complexity; the sequence is NSKLSNNNKISS. Residues 176 to 189 are compositionally biased toward polar residues; it reads GQNDSRLESASQKT. A run of 4 helical transmembrane segments spans residues 235 to 255, 330 to 350, 377 to 397, and 413 to 433; these read FILL…TFLL, SIGN…VIVS, LIIL…WEVI, and FNFL…KYWI.

Belongs to the CemA family.

It localises to the cell inner membrane. Functionally, required for H(+) efflux immediately after light irradiation to form a rapid H(+) concentration gradient across the thylakoid membranes. Together with PxcL, contributes to transient H(+) uptake following dark to light transition. The sequence is that of Proton extrusion protein PxcA from Crocosphaera subtropica (strain ATCC 51142 / BH68) (Cyanothece sp. (strain ATCC 51142)).